A 972-amino-acid chain; its full sequence is Mast/stem cell growth factor receptor Kit (972 aa).

Positions 1 to 25 are cleaved as a signal peptide; the sequence is MRGARRAWDFLFVLQLLLRVQTGSS. Topologically, residues 26–520 are extracellular; that stretch reads QPSVSPEELS…QIHAHTLFTP (495 aa). 5 consecutive Ig-like C2-type domains span residues 27–112, 121–205, 212–308, 317–410, and 413–507; these read PSVS…VFVR, DPPL…LKVR, PVVA…LEVV, PMMN…VYVN, and PEIL…FNFA. 4 disulfides stabilise this stretch: Cys58–Cys97, Cys136–Cys186, Cys151–Cys183, and Cys233–Cys290. 2 N-linked (GlcNAc...) asparagine glycosylation sites follow: Asn94 and Asn145. N-linked (GlcNAc...) asparagine glycosylation is found at Asn283, Asn293, Asn300, Asn320, Asn352, Asn367, Asn400, Asn463, and Asn486. Cys428 and Cys491 are joined by a disulfide. The helical transmembrane segment at 521–541 threads the bilayer; it reads LLIGFVIAAGMMCIIVMILTY. At 542 to 972 the chain is on the cytoplasmic side; that stretch reads KYLQKPMYEV…TQPLLVHEDV (431 aa). Phosphotyrosine; by autocatalysis is present on residues Tyr543, Tyr549, Tyr564, and Tyr566. Residue Tyr564 coordinates Mg(2+). Positions 564–566 are important for interaction with phosphotyrosine-binding proteins; that stretch reads YVY. In terms of domain architecture, Protein kinase spans 585–933; sequence LSFGKTLGAG…ISESTNHIYS (349 aa). ATP contacts are provided by residues 592 to 599, Lys619, and 667 to 673; these read GAGAFGKV and EYCCYGD. Phosphotyrosine; by autocatalysis is present on residues Tyr699, Tyr717, and Tyr726. Residues Ser737 and Ser742 each carry the phosphoserine; by PKC/PRKCA modification. The active-site Proton acceptor is Asp788. Position 792 (Arg792) interacts with ATP. Mg(2+)-binding residues include Asn793 and Asp806. Ser817 carries the post-translational modification Phosphoserine. At Tyr819 the chain carries Phosphotyrosine; by autocatalysis. At Ser887 the chain carries Phosphoserine. Residues Tyr896 and Tyr932 each carry the phosphotyrosine; by autocatalysis modification. Position 955 is a phosphoserine (Ser955).

This sequence belongs to the protein kinase superfamily. Tyr protein kinase family. CSF-1/PDGF receptor subfamily. In terms of assembly, monomer in the absence of bound KITLG/SCF. Homodimer in the presence of bound KITLG/SCF, forming a heterotetramer with two KITLG/SCF molecules. Interacts (via phosphorylated tyrosine residues) with the adapter proteins GRB2 and GRB7 (via SH2 domain), and SH2B2/APS. Interacts (via C-terminus) with MPDZ (via the tenth PDZ domain). Interacts (via phosphorylated tyrosine residues) with PIK3R1 and PIK3 catalytic subunit. Interacts (via phosphorylated tyrosine) with CRK (isoform Crk-II), FYN, SHC1 and MATK/CHK (via SH2 domain). Interacts with LYN and FES/FPS. Interacts (via phosphorylated tyrosine residues) with the protein phosphatases PTPN6/SHP-1 (via SH2 domain), PTPN11/SHP-2 (via SH2 domain) and PTPRU. Interacts with PLCG1. Interacts with DOK1 and TEC. Interacts with IL1RAP (independent of stimulation with KITLG/SCF). A mast cell-specific KITLG/SCF-induced interleukin-33 signaling complex contains IL1RL1, IL1RAP, KIT and MYD88. Ubiquitinated by SOCS6. KIT is rapidly ubiquitinated after autophosphorylation induced by KITLG/SCF binding, leading to internalization and degradation. Post-translationally, autophosphorylated on tyrosine residues. KITLG/SCF binding promotes autophosphorylation. Phosphorylated tyrosine residues are important for interaction with specific binding partners.

It is found in the cell membrane. It catalyses the reaction L-tyrosyl-[protein] + ATP = O-phospho-L-tyrosyl-[protein] + ADP + H(+). With respect to regulation, present in an inactive conformation in the absence of bound ligand. KITLG/SCF binding leads to dimerization and activation by autophosphorylation on tyrosine residues. Activity is down-regulated by PRKCA-mediated phosphorylation on serine residues. Its function is as follows. Tyrosine-protein kinase that acts as a cell-surface receptor for the cytokine KITLG/SCF and plays an essential role in the regulation of cell survival and proliferation, hematopoiesis, stem cell maintenance, gametogenesis, mast cell development, migration and function, and in melanogenesis. In response to KITLG/SCF binding, KIT can activate several signaling pathways. Phosphorylates PIK3R1, PLCG1, SH2B2/APS and CBL. Activates the AKT1 signaling pathway by phosphorylation of PIK3R1, the regulatory subunit of phosphatidylinositol 3-kinase. Activated KIT also transmits signals via GRB2 and activation of RAS, RAF1 and the MAP kinases MAPK1/ERK2 and/or MAPK3/ERK1. Promotes activation of STAT family members STAT1, STAT3, STAT5A and STAT5B. Activation of PLCG1 leads to the production of the cellular signaling molecules diacylglycerol and inositol 1,4,5-trisphosphate. KIT signaling is modulated by protein phosphatases, and by rapid internalization and degradation of the receptor. Activated KIT promotes phosphorylation of the protein phosphatases PTPN6/SHP-1 and PTPRU, and of the transcription factors STAT1, STAT3, STAT5A and STAT5B. Promotes phosphorylation of PIK3R1, CBL, CRK (isoform Crk-II), LYN, MAPK1/ERK2 and/or MAPK3/ERK1, PLCG1, SRC and SHC1. This Sus scrofa (Pig) protein is Mast/stem cell growth factor receptor Kit (KIT).